Here is a 303-residue protein sequence, read N- to C-terminus: Mycothiol acetyltransferase (303 aa).

N-acetyltransferase domains follow at residues 4–141 (ITVR…RSLA) and 154–303 (IVLR…ANGA). Residue E38 participates in 1D-myo-inositol 2-(L-cysteinylamino)-2-deoxy-alpha-D-glucopyranoside binding. Position 80–82 (80–82 (AAV)) interacts with acetyl-CoA. 1D-myo-inositol 2-(L-cysteinylamino)-2-deoxy-alpha-D-glucopyranoside-binding residues include E181, K223, and E234. Acetyl-CoA contacts are provided by residues 238 to 240 (VGI) and 245 to 251 (QGRGLGR). Y272 provides a ligand contact to 1D-myo-inositol 2-(L-cysteinylamino)-2-deoxy-alpha-D-glucopyranoside. Residue 277–282 (NTAAVN) coordinates acetyl-CoA.

Belongs to the acetyltransferase family. MshD subfamily. In terms of assembly, monomer.

The enzyme catalyses 1D-myo-inositol 2-(L-cysteinylamino)-2-deoxy-alpha-D-glucopyranoside + acetyl-CoA = mycothiol + CoA + H(+). In terms of biological role, catalyzes the transfer of acetyl from acetyl-CoA to desacetylmycothiol (Cys-GlcN-Ins) to form mycothiol. This Nocardia farcinica (strain IFM 10152) protein is Mycothiol acetyltransferase.